A 257-amino-acid chain; its full sequence is Ditrans,polycis-undecaprenyl-diphosphate synthase ((2E,6E)-farnesyl-diphosphate specific) (257 aa).

Asp34 is an active-site residue. Asp34 provides a ligand contact to Mg(2+). Substrate contacts are provided by residues 35-38 (GNGR), Trp39, Arg47, and His51. Asn82 functions as the Proton acceptor in the catalytic mechanism. Residues Trp83, Arg85, Arg201, and 207 to 209 (RLS) each bind substrate. Glu220 provides a ligand contact to Mg(2+).

It belongs to the UPP synthase family. In terms of assembly, homodimer. Mg(2+) serves as cofactor.

It catalyses the reaction 8 isopentenyl diphosphate + (2E,6E)-farnesyl diphosphate = di-trans,octa-cis-undecaprenyl diphosphate + 8 diphosphate. Catalyzes the sequential condensation of isopentenyl diphosphate (IPP) with (2E,6E)-farnesyl diphosphate (E,E-FPP) to yield (2Z,6Z,10Z,14Z,18Z,22Z,26Z,30Z,34E,38E)-undecaprenyl diphosphate (di-trans,octa-cis-UPP). UPP is the precursor of glycosyl carrier lipid in the biosynthesis of bacterial cell wall polysaccharide components such as peptidoglycan and lipopolysaccharide. This Francisella tularensis subsp. tularensis (strain SCHU S4 / Schu 4) protein is Ditrans,polycis-undecaprenyl-diphosphate synthase ((2E,6E)-farnesyl-diphosphate specific).